A 745-amino-acid polypeptide reads, in one-letter code: uncharacterized protein (745 aa).

Positions 158 to 256 constitute an HTH araC/xylS-type domain; sequence NQVCDYIELH…HQTPKQYRGD (99 aa). 2 DNA-binding regions (H-T-H motif) span residues 175–196 and 223–246; these read SELS…AESL and ITDI…KHIT.

This is an uncharacterized protein from Staphylococcus aureus.